We begin with the raw amino-acid sequence, 240 residues long: Phosphoribosylaminoimidazole-succinocarboxamide synthase (240 aa).

The protein belongs to the SAICAR synthetase family.

It carries out the reaction 5-amino-1-(5-phospho-D-ribosyl)imidazole-4-carboxylate + L-aspartate + ATP = (2S)-2-[5-amino-1-(5-phospho-beta-D-ribosyl)imidazole-4-carboxamido]succinate + ADP + phosphate + 2 H(+). It functions in the pathway purine metabolism; IMP biosynthesis via de novo pathway; 5-amino-1-(5-phospho-D-ribosyl)imidazole-4-carboxamide from 5-amino-1-(5-phospho-D-ribosyl)imidazole-4-carboxylate: step 1/2. In Wolbachia pipientis wMel, this protein is Phosphoribosylaminoimidazole-succinocarboxamide synthase.